Here is a 1274-residue protein sequence, read N- to C-terminus: Polycomb protein Sfmbt (1274 aa).

The tract at residues Pro-266–Ala-285 is disordered. Polar residues predominate over residues Ser-267–Asn-278. The segment at Pro-331–Arg-366 adopts an FCS-type zinc-finger fold. Zn(2+) contacts are provided by Cys-340, Cys-343, Cys-360, and Cys-364. Positions Thr-381–Ser-394 are enriched in low complexity. 2 disordered regions span residues Thr-381–Gly-401 and Pro-488–Leu-510. Positions Gly-494 to Tyr-509 are enriched in polar residues. MBT repeat units follow at residues Tyr-564–Pro-675, Lys-683–Pro-781, Leu-789–Pro-899, and Phe-907–Pro-1003. Disordered regions lie at residues Ser-1007–His-1063 and Tyr-1083–Ala-1167. The segment covering Lys-1019 to Lys-1028 has biased composition (basic residues). The segment covering Ala-1038–Thr-1050 has biased composition (low complexity). The segment covering Gln-1087 to Gly-1114 has biased composition (acidic residues). Composition is skewed to polar residues over residues Ser-1117–His-1128 and Gly-1158–Ala-1167. Positions Trp-1194–Val-1258 constitute an SAM domain.

Interacts with pho as a component of the pho-repressive complex (PhoRC).

It is found in the nucleus. Functionally, polycomb group (PcG) protein that binds to the Polycomb response elements (PREs) found in the regulatory regions of many genes. PcG proteins act by forming multiprotein complexes, which are required to maintain the transcriptionally repressive state of homeotic genes throughout development. PcG proteins are not required to initiate repression, but to maintain it during later stages of development. They probably act via the methylation of histones, rendering chromatin heritably changed in its expressibility. Necessary but not sufficient to recruit a functional PcG repressive complex that represses target genes, suggesting that the recruitment of the distinct PRC1 complex is also required to allow a subsequent repression. This is Polycomb protein Sfmbt from Drosophila pseudoobscura pseudoobscura (Fruit fly).